The sequence spans 390 residues: Argininosuccinate synthase (390 aa).

Position 6–14 (6–14 (AYSGGLDTT)) interacts with ATP. Y84 serves as a coordination point for L-citrulline. G114 is an ATP binding site. Residues T116, N120, and D121 each coordinate L-aspartate. Residue N120 coordinates L-citrulline. L-citrulline contacts are provided by R124, S171, S180, E253, and Y265.

It belongs to the argininosuccinate synthase family. Type 1 subfamily. In terms of assembly, homotetramer.

The protein localises to the cytoplasm. The catalysed reaction is L-citrulline + L-aspartate + ATP = 2-(N(omega)-L-arginino)succinate + AMP + diphosphate + H(+). It participates in amino-acid biosynthesis; L-arginine biosynthesis; L-arginine from L-ornithine and carbamoyl phosphate: step 2/3. This chain is Argininosuccinate synthase, found in Sulfurisphaera tokodaii (strain DSM 16993 / JCM 10545 / NBRC 100140 / 7) (Sulfolobus tokodaii).